A 568-amino-acid chain; its full sequence is MVLLHWCLLWLLFPLSSRTQKLPTRDEELFQMQIRDKAFFHDSSVIPDGAEISSYLFRDTPKRYFFVVEEDNTPLSVTVTPCDAPLEWKLSLQELPEDRSGEGSGDLEPLEQQKQQIINEEGTELFSYKGNDVEYFISSSSPSGLYQLDLLSTEKDTHFKVYATTTPESDQPYPELPYDPRVDVTSLGRTTVTLAWKPSPTASLLKQPIQYCVVINKEHNFKSLCAVEAKLSADDAFMMAPKPGLDFSPFDFAHFGFPSDNSGKERSFQAKPSPKLGRHVYSRPKVDIQKICIGNKNIFTVSDLKPDTQYYFDVFVVNINSNMSTAYVGTFARTKEEAKQKTVELKDGKITDVFVKRKGAKFLRFAPVSSHQKVTFFIHSCLDAVQIQVRRDGKLLLSQNVEGIQQFQLRGKPKAKYLVRLKGNKKGASMLKILATTRPTKQSFPSLPEDTRIKAFDKLRTCSSATVAWLGTQERNKFCIYKKEVDDNYNEDQKKREQNQCLGPDIRKKSEKVLCKYFHSQNLQKAVTTETIKGLQPGKSYLLDVYVIGHGGHSVKYQSKVVKTRKFC.

The N-terminal stretch at 1 to 19 (MVLLHWCLLWLLFPLSSRT) is a signal peptide. Fibronectin type-III domains are found at residues 261-331 (NSGK…VGTF) and 445-564 (PSLP…VVKT). The N-linked (GlcNAc...) asparagine glycan is linked to Asn-322.

In terms of assembly, binds heparin and chondroitin sulfate. In terms of processing, O-glycosylated; contains heparan sulfate and chondroitin sulfate. Post-translationally, N-glycosylated. In terms of tissue distribution, expressed in neurons along the gonadotropin-releasing hormone (GnRH) expressing neurons migratory route.

Its subcellular location is the secreted. Its function is as follows. Secretory protein that plays a role in various cellular processes. Acts as a chemorepellent acting on gonadotropin-releasing hormone (GnRH) expressing neurons regulating their migration to the hypothalamus. Also promotes neuron migration, growth and survival as well as neurite outgrowth and is involved in the development of the olfactory system. May also act through the regulation of growth factors activity and downstream signaling. Also regulates extracellular matrix assembly and cell adhesiveness. Promotes endothelial cell survival, vessel formation and plays an important role in the process of revascularization through NOS3-dependent mechanisms. The polypeptide is Protein NDNF (NDNF) (Homo sapiens (Human)).